The chain runs to 484 residues: MEIYNTLTRRKENFQPREPGRVCMYVCGPTTYNYIHLGNARPLVFFDTVRRYLIHKGYEVLFVQNFTDVDDKIINRAQEEGDDPLALARRYIGEYFKDADALNVRRADRHPLVSEHIPDIIKMVDELVKKGAAYVVDGNVYFEVRKFAGYGKLSGRTLEDMQAGARVEVDPRKRDPLDFALWKAAKPGEPCWDSPWGPGRPGWHIECSAMSLKYLGTNFDIHGGGYDLIFPHHENEIAQSEAATGQPFVRYWMHNGFITVNEEKMSKSLGNFFLVRDILAKFPPELVRFFLLSTHYRSPLDFDGEKMAAAGRGLERIKTSLRLLYEALERPVSEGVQAVCSRDPFDEIRASFEAAMDDDFNTALAIGAVFDLAREANTAVQRTGPAVSGQDRQILQYALDLFNEFNEVLGIFKVDGASGRLLIDGAAGDDSGLVEGLINLILEVRQEARKRKDWSTADRIRDGLKELGILLEDTPQGVRWKKQG.

Position 27 (cysteine 27) interacts with Zn(2+). Positions 29-39 (PTTYNYIHLGN) match the 'HIGH' region motif. Zn(2+)-binding residues include cysteine 207, histidine 232, and glutamate 236. The short motif at 264–268 (KMSKS) is the 'KMSKS' region element. Lysine 267 lines the ATP pocket.

Belongs to the class-I aminoacyl-tRNA synthetase family. As to quaternary structure, monomer. Requires Zn(2+) as cofactor.

Its subcellular location is the cytoplasm. The catalysed reaction is tRNA(Cys) + L-cysteine + ATP = L-cysteinyl-tRNA(Cys) + AMP + diphosphate. In Pelotomaculum thermopropionicum (strain DSM 13744 / JCM 10971 / SI), this protein is Cysteine--tRNA ligase.